The chain runs to 357 residues: Peptide chain release factor 1 (357 aa).

Position 232 is an N5-methylglutamine (Gln-232).

This sequence belongs to the prokaryotic/mitochondrial release factor family. Methylated by PrmC. Methylation increases the termination efficiency of RF1.

It is found in the cytoplasm. In terms of biological role, peptide chain release factor 1 directs the termination of translation in response to the peptide chain termination codons UAG and UAA. This Maridesulfovibrio salexigens (strain ATCC 14822 / DSM 2638 / NCIMB 8403 / VKM B-1763) (Desulfovibrio salexigens) protein is Peptide chain release factor 1.